Here is a 355-residue protein sequence, read N- to C-terminus: Chorismate synthase (355 aa).

R48 provides a ligand contact to NADP(+). FMN is bound by residues 125-127, 239-240, G280, 295-299, and R321; these read RSS, NA, and KPVAT.

Belongs to the chorismate synthase family. In terms of assembly, homotetramer. FMNH2 is required as a cofactor.

It carries out the reaction 5-O-(1-carboxyvinyl)-3-phosphoshikimate = chorismate + phosphate. The protein operates within metabolic intermediate biosynthesis; chorismate biosynthesis; chorismate from D-erythrose 4-phosphate and phosphoenolpyruvate: step 7/7. Functionally, catalyzes the anti-1,4-elimination of the C-3 phosphate and the C-6 proR hydrogen from 5-enolpyruvylshikimate-3-phosphate (EPSP) to yield chorismate, which is the branch point compound that serves as the starting substrate for the three terminal pathways of aromatic amino acid biosynthesis. This reaction introduces a second double bond into the aromatic ring system. This chain is Chorismate synthase, found in Flavobacterium psychrophilum (strain ATCC 49511 / DSM 21280 / CIP 103535 / JIP02/86).